The primary structure comprises 950 residues: Synaptotagmin-like protein 2 (950 aa).

In terms of domain architecture, RabBD spans 1–57 (MIDLSFLTEEEQDAILKVLQRDAALKRAEEERVRHLPEKIKDDQQLKNMSGQWFYEA). Disordered stretches follow at residues 78 to 98 (RKKL…AKES), 116 to 289 (VEEP…ETLR), and 361 to 620 (ESDQ…SSSG). Positions 87–97 (QNKDTAMRAKE) are enriched in basic and acidic residues. Composition is skewed to polar residues over residues 140–150 (IDMSQESTRTP) and 173–183 (LQQTKPEQSKT). Residues 193 to 205 (KEGELSESKEKSS) are compositionally biased toward basic and acidic residues. Polar residues predominate over residues 219–230 (QTVSTEPENASH). The segment covering 246–264 (NDLEKDDNQSFPRQRRDSL) has biased composition (basic and acidic residues). Positions 434 to 445 (VESSSVINGQQE) are enriched in polar residues. Basic and acidic residues-rich tracts occupy residues 479 to 502 (HSFR…LERR) and 531 to 544 (ELVR…KADQ). Positions 557–567 (TVPSLPDNQFS) are enriched in polar residues. Over residues 608-620 (SPSSLTNLSSSSG) the composition is skewed to low complexity. C2 domains follow at residues 644–769 (VKGS…LKWY) and 784–913 (NRGE…VDWM).

Monomer. Binds NRXN1. Binds RAB27A that has been activated by GTP-binding. Interacts with RAB27B. Isoform 1 is highly susceptible to proteolytic degradation and is stabilized by the interaction with RAB27A. Highly expressed in brain, lung, kidney, testis and in embryos after day 7. Detected at lower levels in skeletal muscle. Expressed in pancreatic alpha cells. Isoform 6 is highly expressed in brain, but not detectable in the other tissues tested. Isoform 1 is expressed abundantly in the stomach and is predominantly localized at the apical region of gastric-surface mucus cells. Isoform 11 is expressed in cytotoxic T-lymphocytes (CTL).

The protein localises to the melanosome membrane. It localises to the cell membrane. Isoform 11 acts as a RAB27A effector protein and plays a role in cytotoxic granule exocytosis in lymphocytes. Required for cytotoxic granule docking at the immunologic synapse. Isoform 1 may play a role in melanosome transport and vesicle trafficking. It controls melanosome distribution in the cell periphery and regulates melanocyte morphology. Isoform 1 acts as a positive mediator of mucus secretion by the surface mucus cells of the stomach. Mediates basal mucus secretion by gastric surface cells by promoting the proper granule biognesis and docking of mucus granules with the apical plasma membrane. The sequence is that of Synaptotagmin-like protein 2 (Sytl2) from Mus musculus (Mouse).